Consider the following 139-residue polypeptide: MFEAINSVDNRVIRRSEEQEKSTLMAEYNKALRTLDVGPFLKYRVKHDVNLGLHRKATGYLISNYTIKKTLEEVESNVERYRLLDHRESLFNMARRNITEARNFVRARKLLNIARERGFFYNELYELEELLDHEWCPET.

This is an uncharacterized protein from Encephalitozoon cuniculi (strain GB-M1) (Microsporidian parasite).